Here is a 1461-residue protein sequence, read N- to C-terminus: MGDAADPREMRRTFIVPAIKPFDHYDFSRAKIACNLAWLVAKAFGTENVPEELGDPFYTDQYDQEHIKPPVVNLLLSAELYCRAGSLILKSDAAKPLLGHDAVIQALAQKGLYVTDQEKLVTERDLHKKPIQMSAHLAMIDTLMMAYTVEMISIEKVIACAQQYSAFFQATDLPYDIEDAVMYWMNKVNEHLKDIMEQEQKSKEHHPAEAPGGQKARYRKEQTLLKQLPCIPLVENLLKDGTDGCALAALIHFYCPAVVRLEDICLKETMSLADSLYNLQLIQEFCQEYLNHCCHFSLEDMLYAASSIKSNYLVFMAELFWWFEVVKPSFVQPRVVRPQGAEPAKDVPSVPVLNAAKRNIRDSSSSSDFSSRYTRPQTHSSASGGIRRSSSMSYVDGFIGTWPKEKRTSVHGVSFDISFDKEDSAQSSTPNRGIIRSVSNEGLTLNNSRASKHIRKNLSFKPVNGEEEESIEEELHVDPHGDLQSPMPLNTNELNSNESTHYKLPNGALQNRVLLDEFGNQIETPSIEEALQIIHDTERPPHTPRPDQIANGFFLHGQDLSILNSNIKLNQSSPDNLTDTKGALSPITDTTEVDTGIHVPSEDIPETMDEDSSLRDYTVSLDSDMDDASKLLQDYDLRASNPREALSPCPSTISTKSQPGSSASSSSGVKMTSFAEQKFRKLNHTDGKSSGSSSQKTTPEGSELNIPHVVSWAQIPEEAGVAPGRDTTQLLASEMVHLRMRLEEKRRAIEAQKKKMEAAFTKQRQKMGRTAFLTVVKKKGEGISPLREEAAGAEDEKVYTDRAKERESQKMDGQRSKSLADIKESMETPPGRWLKSPTTPVDPERQWNLTSPSEETLNEGEILEYTKSIEKLNSSLHFLQQEMQRLSLQQEMLMQMREQQAWVISPPQPSPQKQIRDFKPRQAGLSSAAAPFSSDSPRPTHPSPQSSTRKSASFSVKNQRTPRPNELKITPLNRTLTPPRSVDSLPRLRRFSPSQVPIQTRSFVCFGDDGEPQKEPKQKEEIKKEPSECKGTLGPCDHNPGEKEIKPVESTVSEVLSQPITETVCVTPNEDQLSQPTEPPPKPVFPPTAPKNVNLIEVSLSDLKPPEKADVSVEKLDGESDKEQFDDDQKVCCGFFFKDDQKAENDMAMKRAALLEKRLRREKETQLRKQQLEAEMEHKKEETRRKTEEERQKKEDERARREFIRQEYMRRKQLKLMEDMDTVIKPRPQAAKQKKQRPKSIHRDHIESPKTPIKGPPVSSLSLASLNTGDSESVHSGKRTPRSESVEGFLSPSRCGSRNGEKDWENASTTSSVASGTEYTGPKLYKEPSAKSNKHIIQNALAHCCLAGKVNEGQKKKILEEMEKSDANNFLILFRDSGCQFRSLYTYCPETEEINKLTGIGPKSITKKMIEGLYKYNSDRKQFSHIPAKTLSASVDAITIHSHLWQTKRPVTPKKLLPTKA.

Residues 211-324 (PGGQKARYRK…FMAELFWWFE (114 aa)) enclose the Calponin-homology (CH) domain. The disordered stretch occupies residues 361 to 389 (RDSSSSSDFSSRYTRPQTHSSASGGIRRS). 2 stretches are compositionally biased toward low complexity: residues 362-371 (DSSSSSDFSS) and 380-389 (SSASGGIRRS). 2 positions are modified to phosphoserine: S391 and S393. T401 is subject to Phosphothreonine. Residues S439, S572, S573, S585, and S647 each carry the phosphoserine modification. Disordered regions lie at residues 573 to 613 (SPDN…EDSS) and 639 to 704 (ASNP…GSEL). Phosphothreonine is present on T652. S654 is modified (phosphoserine). Over residues 654 to 673 (STKSQPGSSASSSSGVKMTS) the composition is skewed to low complexity. Over residues 677–687 (QKFRKLNHTDG) the composition is skewed to basic and acidic residues. The stretch at 730 to 767 (LLASEMVHLRMRLEEKRRAIEAQKKKMEAAFTKQRQKM) forms a coiled coil. The segment covering 787-826 (REEAAGAEDEKVYTDRAKERESQKMDGQRSKSLADIKESM) has biased composition (basic and acidic residues). The tract at residues 787 to 855 (REEAAGAEDE…QWNLTSPSEE (69 aa)) is disordered. At S836 the chain carries Phosphoserine. Residues 861 to 900 (EILEYTKSIEKLNSSLHFLQQEMQRLSLQQEMLMQMREQQ) adopt a coiled-coil conformation. The MBD region stretch occupies residues 896–1007 (MREQQAWVIS…IQTRSFVCFG (112 aa)). A phosphoserine mark is found at S905 and S910. Disordered regions lie at residues 921–992 (RQAG…RRFS), 1004–1044 (VCFG…GEKE), 1069–1090 (NEDQ…PTAP), 1102–1124 (DLKP…DKEQ), and 1163–1321 (KETQ…EYTG). A compositionally biased stretch (low complexity) spans 926–937 (SSAAAPFSSDSP). Polar residues predominate over residues 943–962 (SPQSSTRKSASFSVKNQRTP). T970, T975, and T977 each carry phosphothreonine. Phosphoserine is present on residues S981 and S992. Residues 1011–1028 (EPQKEPKQKEEIKKEPSE) are compositionally biased toward basic and acidic residues. Pro residues predominate over residues 1077–1089 (TEPPPKPVFPPTA). 2 stretches are compositionally biased toward basic and acidic residues: residues 1104-1124 (KPPE…DKEQ) and 1163-1224 (KETQ…DTVI). A Phosphoserine modification is found at S1120. Residues 1138-1210 (KDDQKAENDM…REFIRQEYMR (73 aa)) are a coiled coil. Residues 1259-1271 (SSLSLASLNTGDS) show a composition bias toward polar residues. A phosphoserine mark is found at S1285, S1291, and S1293. A compositionally biased stretch (polar residues) spans 1306–1318 (NASTTSSVASGTE). In terms of domain architecture, CKK spans 1321-1455 (GPKLYKEPSA…QTKRPVTPKK (135 aa)).

This sequence belongs to the CAMSAP1 family. In terms of assembly, interacts with CAMSAP3. Interacts with KATNA1 and KATNB1; leading to regulate the length of CAMSAP2-decorated microtubule stretches. Interacts with a complex formed by AKAP9 and PDE4DIP isoform 2/MMG8/SMYLE, which recruits CAMSAP2 to the Golgi. Interacts with MAPRE1/EB1.

The protein resides in the cytoplasm. Its subcellular location is the cytoskeleton. It localises to the golgi apparatus. It is found in the cilium basal body. Its function is as follows. Key microtubule-organizing protein that specifically binds the minus-end of non-centrosomal microtubules and regulates their dynamics and organization. Specifically recognizes growing microtubule minus-ends and autonomously decorates and stabilizes microtubule lattice formed by microtubule minus-end polymerization. Acts on free microtubule minus-ends that are not capped by microtubule-nucleating proteins or other factors and protects microtubule minus-ends from depolymerization. In addition, it also reduces the velocity of microtubule polymerization. Through the microtubule cytoskeleton, also regulates the organization of cellular organelles including the Golgi and the early endosomes. Essential for the tethering, but not for nucleation of non-centrosomal microtubules at the Golgi: together with Golgi-associated proteins AKAP9 and PDE4DIP, required to tether non-centrosomal minus-end microtubules to the Golgi, an important step for polarized cell movement. Also acts as a regulator of neuronal polarity and development: localizes to non-centrosomal microtubule minus-ends in neurons and stabilizes non-centrosomal microtubules, which is required for neuronal polarity, axon specification and dendritic branch formation. Through the microtubule cytoskeleton, regulates the autophagosome transport. The protein is Calmodulin-regulated spectrin-associated protein 2 of Mus musculus (Mouse).